We begin with the raw amino-acid sequence, 142 residues long: Glia maturation factor beta (142 aa).

Ser-2 carries the post-translational modification N-acetylserine. The 136-residue stretch at 4–139 (SLVVCDVAED…TEEWLREKLG (136 aa)) folds into the ADF-H domain.

Belongs to the actin-binding proteins ADF family. GMF subfamily. Phosphorylated; stimulated by phorbol ester.

This protein causes differentiation of brain cells, stimulation of neural regeneration, and inhibition of proliferation of tumor cells. The polypeptide is Glia maturation factor beta (Gmfb) (Rattus norvegicus (Rat)).